We begin with the raw amino-acid sequence, 428 residues long: Dihydroorotase (428 aa).

2 residues coordinate Zn(2+): histidine 59 and histidine 61. Residues 61–63 (HFR) and asparagine 93 each bind substrate. Zn(2+) is bound by residues aspartate 151, histidine 178, and histidine 231. Asparagine 277 serves as a coordination point for substrate. Aspartate 304 contributes to the Zn(2+) binding site. Aspartate 304 is an active-site residue. Substrate is bound by residues histidine 308 and 322–323 (FG).

Belongs to the metallo-dependent hydrolases superfamily. DHOase family. Class I DHOase subfamily. It depends on Zn(2+) as a cofactor.

It catalyses the reaction (S)-dihydroorotate + H2O = N-carbamoyl-L-aspartate + H(+). The protein operates within pyrimidine metabolism; UMP biosynthesis via de novo pathway; (S)-dihydroorotate from bicarbonate: step 3/3. In terms of biological role, catalyzes the reversible cyclization of carbamoyl aspartate to dihydroorotate. This chain is Dihydroorotase, found in Bacillus licheniformis (strain ATCC 14580 / DSM 13 / JCM 2505 / CCUG 7422 / NBRC 12200 / NCIMB 9375 / NCTC 10341 / NRRL NRS-1264 / Gibson 46).